Consider the following 885-residue polypeptide: Ankyrin repeat and SAM domain-containing protein 6 (885 aa).

ANK repeat units follow at residues 8–37 (PGLQ…EPVA), 68–97 (AGNS…SVNS), 101–130 (YGWS…DVNA), 134–163 (LGAS…TVDH), 181–210 (LGIT…DPNH), 215–244 (VGWS…NPDH), 282–312 (KRRP…HVNL), 316–345 (DGAT…DMNK), 350–379 (HGWT…DVTL), and 383–414 (NGYT…QVNK). Residue Asn-129 is modified to 3-hydroxyasparagine. Disordered stretches follow at residues 415–439 (DRGG…SIPM), 491–522 (MRAP…PRRE), 563–775 (SSDR…ITDE), and 855–885 (FESS…SSRR). Positions 608–640 (PSISRSPTSPASSGNFNHSPHSSGGASGVGSMS) are enriched in low complexity. Position 650 is a phosphoserine (Ser-650). Residues 650–662 (SGGSVDSVLSQIA) are compositionally biased toward polar residues. Composition is skewed to low complexity over residues 689-713 (GSSP…TSSS) and 722-739 (PPSG…TLTP). Phosphoserine is present on residues Ser-734 and Ser-742. Over residues 750-770 (SSVSSSSSHRQSKSSGGSSSG) the composition is skewed to low complexity. In terms of domain architecture, SAM spans 773 to 836 (TDEDELTGIL…LAAISELNAG (64 aa)). The segment covering 855 to 865 (FESSASNTRAP) has biased composition (polar residues). A compositionally biased stretch (basic and acidic residues) spans 876 to 885 (RPEETVSSRR).

Homooligomer. Interacts with NEK8. Central component of a complex containing at least ANKS6, INVS, NEK8 and NPHP3. ANKS6 may organize complex assembly by linking INVS and NPHP3 to NEK8 and INVS may target the complex to the proximal ciliary axoneme. Interacts (via SAM domain) with BICC1 (via KH domains) in an RNA-dependent manner. Interacts (via SAM domain) with ANKS3 (via SAM domain). In terms of processing, hydroxylated at Asn-129, most probably by HIF1AN. This hydroxylation results in decreased NEK8-binding. In terms of tissue distribution, widely expressed with moderate level in brain, skeletal muscle and testis. Expressed in renal tubules.

The protein resides in the cell projection. Its subcellular location is the cilium. It localises to the cytoplasm. Functionally, required for renal function. In Rattus norvegicus (Rat), this protein is Ankyrin repeat and SAM domain-containing protein 6 (Anks6).